Here is a 181-residue protein sequence, read N- to C-terminus: Oligoribonuclease (181 aa).

The region spanning 8–171 (LIWVDLEMTG…VDIQESIAEL (164 aa)) is the Exonuclease domain. Residue Y129 is part of the active site.

The protein belongs to the oligoribonuclease family.

Its subcellular location is the cytoplasm. 3'-to-5' exoribonuclease specific for small oligoribonucleotides. The protein is Oligoribonuclease of Shewanella loihica (strain ATCC BAA-1088 / PV-4).